A 172-amino-acid polypeptide reads, in one-letter code: Acetolactate synthase small subunit (172 aa).

Residues isoleucine 4–asparagine 79 enclose the ACT domain.

It belongs to the acetolactate synthase small subunit family. As to quaternary structure, dimer of large and small chains.

It catalyses the reaction 2 pyruvate + H(+) = (2S)-2-acetolactate + CO2. The protein operates within amino-acid biosynthesis; L-isoleucine biosynthesis; L-isoleucine from 2-oxobutanoate: step 1/4. Its pathway is amino-acid biosynthesis; L-valine biosynthesis; L-valine from pyruvate: step 1/4. This chain is Acetolactate synthase small subunit (ilvH), found in Bacillus subtilis (strain 168).